A 545-amino-acid chain; its full sequence is Glucose-6-phosphate isomerase (545 aa).

Residue E351 is the Proton donor of the active site. Catalysis depends on residues H382 and K510.

This sequence belongs to the GPI family.

The protein localises to the cytoplasm. The catalysed reaction is alpha-D-glucose 6-phosphate = beta-D-fructose 6-phosphate. Its pathway is carbohydrate biosynthesis; gluconeogenesis. It functions in the pathway carbohydrate degradation; glycolysis; D-glyceraldehyde 3-phosphate and glycerone phosphate from D-glucose: step 2/4. Its function is as follows. Catalyzes the reversible isomerization of glucose-6-phosphate to fructose-6-phosphate. In Shewanella frigidimarina (strain NCIMB 400), this protein is Glucose-6-phosphate isomerase.